The following is an 819-amino-acid chain: Meiotically up-regulated gene 45 protein (819 aa).

Residues 797–817 traverse the membrane as a helical segment; sequence AMCLLTLLIGIYLILQVVFIY.

The protein localises to the membrane. Functionally, has a role in meiosis. This chain is Meiotically up-regulated gene 45 protein (mug45), found in Schizosaccharomyces pombe (strain 972 / ATCC 24843) (Fission yeast).